A 208-amino-acid chain; its full sequence is Small ribosomal subunit protein uS4 (208 aa).

An S4 RNA-binding domain is found at 98 to 161 (RRLDNVVYRL…RKSKRFKEVF (64 aa)).

This sequence belongs to the universal ribosomal protein uS4 family. Part of the 30S ribosomal subunit. Contacts protein S5. The interaction surface between S4 and S5 is involved in control of translational fidelity.

Functionally, one of the primary rRNA binding proteins, it binds directly to 16S rRNA where it nucleates assembly of the body of the 30S subunit. In terms of biological role, with S5 and S12 plays an important role in translational accuracy. This chain is Small ribosomal subunit protein uS4, found in Halothermothrix orenii (strain H 168 / OCM 544 / DSM 9562).